A 101-amino-acid chain; its full sequence is MAKLSSVNKNERRKKLVKKYAGRYAKLKAIAADSSLDDGERLIARLKMAEIPRNGNPTRIRNRCELTGRPRAYYRKFRLCRVQLRDLANKGLIPGVVKSSW.

This sequence belongs to the universal ribosomal protein uS14 family. Part of the 30S ribosomal subunit. Contacts proteins S3 and S10.

Its function is as follows. Binds 16S rRNA, required for the assembly of 30S particles and may also be responsible for determining the conformation of the 16S rRNA at the A site. The protein is Small ribosomal subunit protein uS14 of Sphingopyxis alaskensis (strain DSM 13593 / LMG 18877 / RB2256) (Sphingomonas alaskensis).